Here is a 268-residue protein sequence, read N- to C-terminus: MLKAIVTGGGGKMGARIISLLEEEGGMQLTGVVEKKDHPAAGKDIGEFLGSGKRGIVIQSDLGFCIAGGDVIIDFTSHEASMRHMEMAAEHKRPIVIGSTGFSADEMDRIRKFAQNVPCVLAPNMSVGVNVMFKLLKIVAETLGDDYDVEILEVHHRLKKDAPSGTALKMAQVVAEALGRELDEVGIYERKGLIGERSKKEIGIQALRAGDIVGEHTVIFGAVGERLELIHRAHSRDNFARGAIRAAKWVVRQEPGLYDMQDVLGFRS.

NAD(+)-binding positions include 8-13 (GGGGKM) and Glu34. Lys35 provides a ligand contact to NADP(+). Residues 98 to 100 (GST) and 122 to 125 (APNM) contribute to the NAD(+) site. His155 (proton donor/acceptor) is an active-site residue. Residue His156 coordinates (S)-2,3,4,5-tetrahydrodipicolinate. Catalysis depends on Lys159, which acts as the Proton donor. 165-166 (GT) lines the (S)-2,3,4,5-tetrahydrodipicolinate pocket.

Belongs to the DapB family.

Its subcellular location is the cytoplasm. It carries out the reaction (S)-2,3,4,5-tetrahydrodipicolinate + NAD(+) + H2O = (2S,4S)-4-hydroxy-2,3,4,5-tetrahydrodipicolinate + NADH + H(+). The catalysed reaction is (S)-2,3,4,5-tetrahydrodipicolinate + NADP(+) + H2O = (2S,4S)-4-hydroxy-2,3,4,5-tetrahydrodipicolinate + NADPH + H(+). Its pathway is amino-acid biosynthesis; L-lysine biosynthesis via DAP pathway; (S)-tetrahydrodipicolinate from L-aspartate: step 4/4. Catalyzes the conversion of 4-hydroxy-tetrahydrodipicolinate (HTPA) to tetrahydrodipicolinate. In Syntrophus aciditrophicus (strain SB), this protein is 4-hydroxy-tetrahydrodipicolinate reductase.